We begin with the raw amino-acid sequence, 111 residues long: uncharacterized protein (111 aa).

Its subcellular location is the mitochondrion. This is an uncharacterized protein from Arabidopsis thaliana (Mouse-ear cress).